The chain runs to 336 residues: Phytochrome A-associated F-box protein (336 aa).

In terms of domain architecture, F-box spans 3–55 (ESVFSCIPEDVVFNIFFKLQDDPRNWARLACVCTKFSSIVRNVCCKTQCYSAI). The Nuclear localization signal signature appears at 197–201 (RKRRK).

As to quaternary structure, probable component of an E3 ubiquitin ligase SCF complex. Interacts with SKP1A/ASK1 and SKP1B/ASK2.

The protein localises to the nucleus. Its pathway is protein modification; protein ubiquitination. In terms of biological role, component of SCF(ASK-cullin-F-box) E3 ubiquitin ligase complexes, which may mediate the ubiquitination and subsequent proteasomal degradation of target proteins. Negative regulator of the phyA signaling pathway that shifts the responsiveness of the phyA signaling system associated with hypocotyl elongation from red to far-red wavelength. In Arabidopsis thaliana (Mouse-ear cress), this protein is Phytochrome A-associated F-box protein (EID1).